The primary structure comprises 306 residues: Bifunctional protein FolD (306 aa).

NADP(+)-binding positions include 164 to 166 (GRS), Ser-189, and Thr-230.

Belongs to the tetrahydrofolate dehydrogenase/cyclohydrolase family. As to quaternary structure, homodimer.

The catalysed reaction is (6R)-5,10-methylene-5,6,7,8-tetrahydrofolate + NADP(+) = (6R)-5,10-methenyltetrahydrofolate + NADPH. The enzyme catalyses (6R)-5,10-methenyltetrahydrofolate + H2O = (6R)-10-formyltetrahydrofolate + H(+). It functions in the pathway one-carbon metabolism; tetrahydrofolate interconversion. Its function is as follows. Catalyzes the oxidation of 5,10-methylenetetrahydrofolate to 5,10-methenyltetrahydrofolate and then the hydrolysis of 5,10-methenyltetrahydrofolate to 10-formyltetrahydrofolate. This Solibacter usitatus (strain Ellin6076) protein is Bifunctional protein FolD.